Here is an 88-residue protein sequence, read N- to C-terminus: Small ribosomal subunit protein uS17 (88 aa).

The protein belongs to the universal ribosomal protein uS17 family. Part of the 30S ribosomal subunit.

One of the primary rRNA binding proteins, it binds specifically to the 5'-end of 16S ribosomal RNA. The sequence is that of Small ribosomal subunit protein uS17 from Nitratidesulfovibrio vulgaris (strain ATCC 29579 / DSM 644 / CCUG 34227 / NCIMB 8303 / VKM B-1760 / Hildenborough) (Desulfovibrio vulgaris).